We begin with the raw amino-acid sequence, 447 residues long: Protein disulfide-isomerase like 2-2 (447 aa).

The first 26 residues, 1–26 (MERKMYKSTVFPICCLLFALFDRGNA), serve as a signal peptide directing secretion. 2 consecutive Thioredoxin domains span residues 27-139 (LYGS…QIKA) and 161-275 (KKKS…QLES). Active-site nucleophile residues include cysteine 62 and cysteine 65. The cysteines at positions 62 and 65 are disulfide-linked. The disordered stretch occupies residues 146 to 170 (DGKTSGTKNGGGSSEKKKSEPSASV). A glycan (N-linked (GlcNAc...) asparagine) is linked at asparagine 173. Active-site nucleophile residues include cysteine 197 and cysteine 200. Cysteine 197 and cysteine 200 are joined by a disulfide. The Prevents secretion from ER motif lies at 444-447 (KDDL).

Belongs to the protein disulfide isomerase family. As to expression, widely expressed.

It localises to the endoplasmic reticulum lumen. The enzyme catalyses Catalyzes the rearrangement of -S-S- bonds in proteins.. In terms of biological role, acts as a protein-folding catalyst that interacts with nascent polypeptides to catalyze the formation, isomerization, and reduction or oxidation of disulfide bonds. This Arabidopsis thaliana (Mouse-ear cress) protein is Protein disulfide-isomerase like 2-2 (PDIL2-2).